A 618-amino-acid polypeptide reads, in one-letter code: Two-component response regulator-like APRR1 (618 aa).

The 119-residue stretch at 20 to 138 (RILLCDNDST…ELLNLWTHMW (119 aa)) folds into the Response regulatory domain. Composition is skewed to polar residues over residues 161–174 (SDQSDPNTNSTNLF), 187–200 (NPQRGNLSHQENEW), 246–257 (RNSNPAQFSSAP), 324–334 (PKSTVLRTNGQ), and 375–389 (TEQYHSQGETLQNGA). Disordered stretches follow at residues 161–200 (SDQSDPNTNSTNLFSDDTDDRSLRSTNPQRGNLSHQENEW), 239–260 (SHHEPMKRNSNPAQFSSAPKKS), 316–338 (TKQARRATPKSTVLRTNGQDPPL), 368–395 (QAHRSRGTEQYHSQGETLQNGASYPHSL), and 573–618 (VRKM…ALGT). One can recognise a CCT domain in the interval 533–575 (REEALLKFRRKRNQRCFDKKIRYVNRKRLAERRPRVKGQFVRK). A coiled-coil region spans residues 588 to 610 (DSADYDDEEEEEEEEEEENRDSS). The segment covering 590–606 (ADYDDEEEEEEEEEEEN) has biased composition (acidic residues).

Belongs to the ARR-like family. In terms of assembly, interacts with PIF1, PIL2, PIF3, PIF4, PIL5, PIL6, ABI3 (via C-terminus), ADO1/ZTL, ADO2, APRR3 and TCP21/CHE. Both the phosphorylated and the dephosphorylated forms interact with ADO1/ZLT. Phosphorylated; during the day. Phosphorylation is required for optimal interaction with APRR3. In terms of tissue distribution, expressed in leaves, flowers and siliques. Restricted to the vasculature.

The protein localises to the nucleus. In terms of biological role, controls photoperiodic flowering response. Component of the circadian clock. Expression of several members of the ARR-like family is controlled by circadian rhythm. The particular coordinated sequential expression of APRR9, APRR7, APRR5, APRR3 and APPR1 result to circadian waves that may be at the basis of the endogenous circadian clock. Positive regulator of CCA1 and LHY expression. This chain is Two-component response regulator-like APRR1 (APRR1), found in Arabidopsis thaliana (Mouse-ear cress).